The following is a 61-amino-acid chain: MAKKSMIAKQKRTPKYAVQAYTRCERCGRPHSVIRKFKLCRICFRELAYKGQIPGVKKASW.

The Zn(2+) site is built by C24, C27, C40, and C43.

This sequence belongs to the universal ribosomal protein uS14 family. Zinc-binding uS14 subfamily. As to quaternary structure, part of the 30S ribosomal subunit. Contacts proteins S3 and S10. It depends on Zn(2+) as a cofactor.

Binds 16S rRNA, required for the assembly of 30S particles and may also be responsible for determining the conformation of the 16S rRNA at the A site. This Listeria welshimeri serovar 6b (strain ATCC 35897 / DSM 20650 / CCUG 15529 / CIP 8149 / NCTC 11857 / SLCC 5334 / V8) protein is Small ribosomal subunit protein uS14B.